Reading from the N-terminus, the 142-residue chain is Two-component response regulator ARR22 (142 aa).

The 118-residue stretch at N23 to F140 folds into the Response regulatory domain. D74 carries the 4-aspartylphosphate modification.

It belongs to the ARR family. Type-A subfamily. Post-translationally, two-component system major event consists of a His-to-Asp phosphorelay between a sensor histidine kinase (HK) and a response regulator (RR). In plants, the His-to-Asp phosphorelay involves an additional intermediate named Histidine-containing phosphotransfer protein (HPt). This multistep phosphorelay consists of a His-Asp-His-Asp sequential transfer of a phosphate group between first a His and an Asp of the HK protein, followed by the transfer to a conserved His of the HPt protein and finally the transfer to an Asp in the receiver domain of the RR protein.

The protein localises to the nucleus. Functions as a response regulator involved in His-to-Asp phosphorelay signal transduction system. Phosphorylation of the Asp residue in the receiver domain activates the ability of the protein to promote the transcription of target genes. Type-A response regulators seem to act as negative regulators of the cytokinin signaling. The polypeptide is Two-component response regulator ARR22 (ARR22) (Arabidopsis thaliana (Mouse-ear cress)).